The primary structure comprises 502 residues: Mannitol 2-dehydrogenase (502 aa).

37 to 48 (IVHIGVGGFHRA) contributes to the NAD(+) binding site.

Belongs to the mannitol dehydrogenase family. As to quaternary structure, monomer.

The catalysed reaction is D-mannitol + NAD(+) = D-fructose + NADH + H(+). Its function is as follows. Catalyzes the NAD(H)-dependent interconversion of D-fructose and D-mannitol in the mannitol metabolic pathway. This is Mannitol 2-dehydrogenase from Aspergillus clavatus (strain ATCC 1007 / CBS 513.65 / DSM 816 / NCTC 3887 / NRRL 1 / QM 1276 / 107).